Here is a 192-residue protein sequence, read N- to C-terminus: Cytidylate kinase (192 aa).

7–15 (GPPGSGKST) contributes to the ATP binding site.

The protein belongs to the cytidylate kinase family. Type 2 subfamily.

It localises to the cytoplasm. It carries out the reaction CMP + ATP = CDP + ADP. The enzyme catalyses dCMP + ATP = dCDP + ADP. This Halorubrum lacusprofundi (strain ATCC 49239 / DSM 5036 / JCM 8891 / ACAM 34) protein is Cytidylate kinase.